We begin with the raw amino-acid sequence, 429 residues long: 3-phosphoshikimate 1-carboxyvinyltransferase (429 aa).

Residues Lys22, Ser23, and Arg27 each coordinate 3-phosphoshikimate. Residue Lys22 participates in phosphoenolpyruvate binding. 2 residues coordinate phosphoenolpyruvate: Gly93 and Arg122. 3-phosphoshikimate contacts are provided by Ser168, Ser169, Gln170, Ser196, Asp311, and Lys338. Gln170 contacts phosphoenolpyruvate. Asp311 acts as the Proton acceptor in catalysis. Phosphoenolpyruvate contacts are provided by Arg342 and Arg384.

Belongs to the EPSP synthase family. Monomer.

The protein localises to the cytoplasm. The catalysed reaction is 3-phosphoshikimate + phosphoenolpyruvate = 5-O-(1-carboxyvinyl)-3-phosphoshikimate + phosphate. It functions in the pathway metabolic intermediate biosynthesis; chorismate biosynthesis. In terms of biological role, catalyzes the transfer of the enolpyruvyl moiety of phosphoenolpyruvate (PEP) to the 5-hydroxyl of shikimate-3-phosphate (S3P) to produce enolpyruvyl shikimate-3-phosphate and inorganic phosphate. In Methanocaldococcus jannaschii (strain ATCC 43067 / DSM 2661 / JAL-1 / JCM 10045 / NBRC 100440) (Methanococcus jannaschii), this protein is 3-phosphoshikimate 1-carboxyvinyltransferase.